Consider the following 1360-residue polypeptide: Lysine-specific demethylase REF6 (1360 aa).

The residue at position 2 (alanine 2) is an N-acetylalanine. The JmjN domain maps to 20–61 (APEFRPTLAEFQDPIAYILKIEEEASRYGICKILPPLPPPSK). The region spanning 203–369 (ETAWNMRAMS…MAKDAAIRRA (167 aa)) is the JmjC domain. Fe cation contacts are provided by histidine 246, glutamate 248, and histidine 337. The disordered stretch occupies residues 652 to 698 (YGDSSDSEEEDQKGLVTPSSKGETKTYDQEGSDGHEEARDGRTSDFN). The span at 673–694 (GETKTYDQEGSDGHEEARDGRT) shows a compositional bias: basic and acidic residues. Residues 944–951 (CRKRKIRA) carry the Nuclear localization signal motif. 4 disordered regions span residues 955–1012 (PRKK…DPHK), 1044–1081 (AASE…SQQT), 1133–1155 (TGKR…QSSR), and 1172–1238 (EELD…NEEE). Polar residues-rich tracts occupy residues 994 to 1008 (ETGN…NQMS) and 1046 to 1057 (SESSMENGSQHS). The segment covering 1136–1147 (RQTRSTAKRIAK) has biased composition (basic residues). Positions 1225–1238 (EKEEEEEEEENEEE) are enriched in acidic residues. The segment at 1243 to 1266 (YQCNMEGCTMSFSSEKQLMLHKRN) adopts a C2H2-type 1; degenerate zinc-finger fold. Residues cysteine 1245, cysteine 1250, histidine 1263, cysteine 1268, cysteine 1273, histidine 1280, histidine 1286, histidine 1290, cysteine 1298, cysteine 1303, histidine 1316, histidine 1320, cysteine 1328, cysteine 1333, histidine 1346, and histidine 1352 each contribute to the Zn(2+) site. 3 C2H2-type zinc fingers span residues 1266-1290 (NICP…QRVH), 1296-1320 (LKCP…IRVH), and 1326-1352 (YVCA…KTGH). The interval 1275-1348 (KNFFSHKYLV…FVSDFSRHKR (74 aa)) is DNA-binding.

The protein belongs to the JHDM3 histone demethylase family. Forms homooligomers. Interacts with BZR2 (via N-terminus). Interacts with BRM in the SWI/SNF complex. Interacts (via N-terminus) with NFYC9. Associates with INO80. As to expression, highly expressed in the shoot apical meristem and primary and secondary root tips, and lower expression in cotyledons, leaves and root axis along vascular tissues. Detected in inflorescences, stems and siliques. Present in seeds.

Its subcellular location is the nucleus. The enzyme catalyses N(6),N(6),N(6)-trimethyl-L-lysyl(27)-[histone H3] + 2-oxoglutarate + O2 = N(6),N(6)-dimethyl-L-lysyl(27)-[histone H3] + formaldehyde + succinate + CO2. The catalysed reaction is N(6),N(6)-dimethyl-L-lysyl(27)-[histone H3] + 2-oxoglutarate + O2 = N(6)-methyl-L-lysyl(27)-[histone H3] + formaldehyde + succinate + CO2. Its function is as follows. Histone demethylase that demethylates 'Lys-27' (H3K27me) of histone H3, thus acting as a positive regulator of gene expression. Demethylates both tri- (H3K27me3) and di-methylated (H3K27me2) H3K27me. Also demethylates H3K4me3/2 and H3K36me3/2 in an in vitro assay. Involved in the transcriptional regulation of hundreds of genes regulating developmental patterning and responses to various stimuli. Binds DNA via its four zinc fingers in a sequence-specific manner, 5'-CTCTG(C/T)T(C/T)-3' (5'-CTCTGYTY-3'), with a preference for hypo-methylated status (e.g. cytosine methylation), to promote the demethylation of H3K27me3 and recruit the chromatin remodeler BRM in order to activate gene expression. Participates in the regulation of organ boundary formation. Bind mostly motifs located in active chromatin states which are depleted for heterochromatic modifications. Involved in the regulation of flowering time by repressing FLOWERING LOCUS C (FLC) expression. Stimulates lateral roots formation (e.g. primordium initiation and emergence) via the epigenetic de-repression of PIN genes such as PIN1, PIN3 and PIN7 directly by modulating the methylation status of their loci. Interacts with the NF-Y complex to regulate SOC1. Mediates the recruitment of BRM to its target loci. Together with EEN, involved in the epigenetic chromatin-dependent regulatory mechanism that monitors the expression of the essential multifunctional plant stress regulator EIN2 via H3K27me3 repressive histone demethylation and histone variant H2A.Z eviction, thus modulating responses to ethylene (ET), especially during embryogenesis. Eluviates seed dormancy by triggering abscisic acid (ABA) catabolism in seeds via the induction of CYP707A1 and CYP707A3 expression, genes involved in ABA degradation; binds directly to CYP707A1 and CYP707A3 loci to reduce their H3K27me3 levels in developing siliques. Required for systemic acquired resistance (SAR) toward pathogenic bacteria (e.g. Pseudomonas syringae pv tomato DC3000 (avrPto)). Together with FLD and MSI4/FVE, contributes to dehydroabietinal-dependent (DA, a diterpenoid tricyclic diterpene) activation of flowering ans SAR. Binds to the HSFA2 chromatin region to alleviate H3K27me3 repressive marks and trigger its expression in response to heat in a BRM-dependent manner. Involved in the mechanisms necessary for quick response to heat and subsequent heritable transgenerational memory of heat acclimation (global warming) such as early flowering and attenuated immunity; this process includes epigenetic regulation as well as post-transcriptional gene silencing (PTGS). In response to heat, HSFA2 is activated and promotes the expression of REF6 which in turn derepresses HSFA2, thus establishing a heritable feedback loop able to trigger SGIP1 and subsequent SGIP1-mediated SGS3 degradation; this prevents the biosynthesis of trans-acting siRNA (tasiRNA) and leads to the release of HTT5, which drives early flowering but attenuates immunity. Involved in the maintenance of H3K27me1 histone marks on euchromatin in a PRC2-dependent manner, to maintain low-level basal expression of corresponding genes. Together with ELF6, required for H3K27me3 resetting (especially in constitutive heterochromatin within the pericentromeric regions) and transgenerational inheritance of histone marks, thus acting in safeguarding genome and epigenome integrity during sexual reproduction. In Arabidopsis thaliana (Mouse-ear cress), this protein is Lysine-specific demethylase REF6.